We begin with the raw amino-acid sequence, 102 residues long: Enhancer of rudimentary homolog (102 aa).

This sequence belongs to the E(R) family. As to quaternary structure, homodimer.

Functionally, may have a role in the cell cycle. The sequence is that of Enhancer of rudimentary homolog (ERH) from Taenia solium (Pork tapeworm).